Reading from the N-terminus, the 186-residue chain is uncharacterized protein (186 aa).

The region spanning 89–164 (LMSLGIGEDI…NTPLKLYSIY (76 aa)) is the Cupin type-2 domain. Position 117-124 (117-124 (GIVKMGKS)) interacts with ATP.

This is an uncharacterized protein from Bacillus subtilis (strain 168).